A 583-amino-acid polypeptide reads, in one-letter code: Asparagine synthetase, root [glutamine-hydrolyzing] (583 aa).

Cys-2 acts as the For GATase activity in catalysis. The Glutamine amidotransferase type-2 domain maps to 2–185 (CGILAVLGCS…PGHLYSSKDS (184 aa)). L-glutamine is bound by residues 50 to 54 (RLAIV), 75 to 77 (NGE), and Asp-98. Residues Leu-231, Val-267, and 341-342 (SG) contribute to the ATP site. In terms of domain architecture, Asparagine synthetase spans 237-516 (DSSLVASITS…PQNSARLTVP (280 aa)).

Roots.

The catalysed reaction is L-aspartate + L-glutamine + ATP + H2O = L-asparagine + L-glutamate + AMP + diphosphate + H(+). It participates in amino-acid biosynthesis; L-asparagine biosynthesis; L-asparagine from L-aspartate (L-Gln route): step 1/1. This is Asparagine synthetase, root [glutamine-hydrolyzing] (AS2) from Pisum sativum (Garden pea).